Consider the following 92-residue polypeptide: Transcription factor PRE4 (92 aa).

Residues 5-60 (KSRSRQTGASMITDEQINDLVLQLHRLLPELANNRRSGKVSASRVLQETCSYIRNL) form the bHLH domain.

Belongs to the bHLH protein family. Interacts with HFR1 and IBH1. In terms of tissue distribution, expressed in roots, leaves, stems and flowers.

Its subcellular location is the nucleus. Functionally, atypical and probable non DNA-binding bHLH transcription factor that integrates multiple signaling pathways to regulate cell elongation and plant development. Regulates light responses by binding and inhibiting the activity of the bHLH transcription factor HFR1, a critical regulator of light signaling and shade avoidance. May have a regulatory role in various aspects of gibberellin-dependent growth and development. The polypeptide is Transcription factor PRE4 (PRE4) (Arabidopsis thaliana (Mouse-ear cress)).